A 1480-amino-acid chain; its full sequence is Cystic fibrosis transmembrane conductance regulator (1480 aa).

The Cytoplasmic portion of the chain corresponds to 1-77; it reads MQRSPLEKAS…KLINALRRCF (77 aa). The chain crosses the membrane as a helical span at residues 78–98; sequence FWRFMFYGILLYLGEVTKAVQ. The ABC transmembrane type-1 1 domain maps to 81–365; sequence FMFYGILLYL…WAVQTWYDSL (285 aa). Residues 99 to 122 lie on the Extracellular side of the membrane; the sequence is PLLLGRIIASYDPDNKTERSIAIY. Residues 123–146 form a helical membrane-spanning segment; that stretch reads LGIGLCLLFIVRTLLLHPAIFGLH. Topologically, residues 147–195 are cytoplasmic; it reads HIGMQMRIAMFSLIYKKTLKLSSRVLDKISIGQLVSLLSNNLNKFDEGL. A helical transmembrane segment spans residues 196–216; sequence ALAHFVWIAPLQVALLMGLIW. At 217 to 222 the chain is on the extracellular side; sequence ELLQAS. A helical membrane pass occupies residues 223–243; it reads VFCGLGFLIVLALFQAGLGRM. Residues 244–298 are Cytoplasmic-facing; it reads MMKYRDQRAGKINERLVITSEMIENIQSVKAYCWEEAMEKMIENLRQTELKLTRK. The chain crosses the membrane as a helical span at residues 299–319; the sequence is AAYVRYFNSSAFFFSGFFVVF. At 320 to 339 the chain is on the extracellular side; the sequence is LSVLPYALIKGIILRKIFTT. Residues 340-358 traverse the membrane as a helical segment; the sequence is ISFCIVLRMAVTRQFPWAV. The Cytoplasmic portion of the chain corresponds to 359-858; it reads QTWYDSLGAI…YLRYITLHKS (500 aa). Residues Trp401, Ser434, 458–465, and Gln493 each bind ATP; that span reads GSTGAGKT. One can recognise an ABC transporter 1 domain in the interval 423 to 646; the sequence is NGHDNLFFSN…RPDFSSKLMG (224 aa). Cys524 carries the S-palmitoyl cysteine lipid modification. A phosphoserine mark is found at Ser549 and Ser660. The disordered R region stretch occupies residues 654–831; it reads SSERRNSILT…EEINEEDLKE (178 aa). A Phosphoserine; by PKA modification is found at Ser670. Ser686 carries the phosphoserine modification. Residue Lys688 forms a Glycyl lysine isopeptide (Lys-Gly) (interchain with G-Cter in ubiquitin) linkage. 2 positions are modified to phosphoserine: Ser700 and Ser712. Thr717 carries the post-translational modification Phosphothreonine. Residues Ser737, Ser753, Ser768, Ser790, Ser795, and Ser813 each carry the phosphoserine modification. The chain crosses the membrane as a helical span at residues 859-879; the sequence is LIFVLIWCLVIFLAEVAASLV. The 297-residue stretch at 859–1155 folds into the ABC transmembrane type-1 2 domain; that stretch reads LIFVLIWCLV…AVNSSIDVDS (297 aa). Residues 880–918 lie on the Extracellular side of the membrane; sequence VLWLLGNTSFQDKGNSTYSRNNSYAVIITNTSSYYVFYI. Residues Asn894, Asn900, and Asn909 are each glycosylated (N-linked (GlcNAc...) asparagine). Residues 919–939 form a discontinuously helical membrane-spanning segment; it reads YVGVADTLLALGFFRGLPLVH. Residues 940–990 are Cytoplasmic-facing; that stretch reads TLITVSKILHHKMLHSVLQAPMSTLNTLKAGGILNRFSKDIAILDDLLPLT. A helical transmembrane segment spans residues 991–1011; that stretch reads IFDFIQLLLIVIGAIAVVSVL. Topologically, residues 1012–1013 are extracellular; it reads QP. The chain crosses the membrane as a helical span at residues 1014–1034; that stretch reads YIFLATVPVIAAFILLRAYFL. At 1035-1095 the chain is on the cytoplasmic side; sequence QTSQQLKQLE…TANWFLYLST (61 aa). Residues 1096–1116 traverse the membrane as a helical segment; that stretch reads LRWFQMRIEMIFVIFFIAVTF. Residues 1117–1130 are Extracellular-facing; the sequence is ISILTTGEGEGTVG. The chain crosses the membrane as a helical span at residues 1131-1151; sequence IILTLAMNIMSTLQWAVNSSI. The Cytoplasmic segment spans residues 1152–1480; it reads DVDSLMRSVS…TEEEVQETRL (329 aa). An ABC transporter 2 domain is found at 1210 to 1443; sequence MTIKDLTAKY…KSLFQQAISH (234 aa). ATP is bound by residues Tyr1219 and 1244 to 1251; that span reads GRTGSGKS. The interval 1386–1480 is interaction with GORASP2; the sequence is RALKQAFADC…TEEEVQETRL (95 aa). The S-palmitoyl cysteine moiety is linked to residue Cys1395. A phosphoserine mark is found at Ser1444 and Ser1456. The tract at residues 1452-1480 is disordered; sequence HRNSSKYKSRPQIASLKEETEEEVQETRL. The span at 1470–1480 shows a compositional bias: acidic residues; sequence ETEEEVQETRL. The short motif at 1478-1480 is the PDZ-binding element; that stretch reads TRL.

Belongs to the ABC transporter superfamily. ABCC family. CFTR transporter (TC 3.A.1.202) subfamily. As to quaternary structure, monomer; does not require oligomerization for channel activity. May form oligomers in the membrane. Interacts with SLC26A3, SLC26A6 and NHERF1. Interacts with SHANK2. Interacts with MYO6. Interacts (via C-terminus) with GOPC (via PDZ domain); this promotes CFTR internalization and thereby decreases channel activity. Interacts with SLC4A7 through NHERF1. Found in a complex with MYO5B and RAB11A. Interacts with ANO1. Interacts with SLC26A8. Interacts with AHCYL1; the interaction increases CFTR activity. Interacts with CSE1L. The core-glycosylated form interacts with GORASP2 (via PDZ GRASP-type 1 domain) in respone to ER stress. Interacts with MARCHF2; the interaction leads to CFTR ubiqtuitination and degradation. Interacts with ADGRG2. N-glycosylated. In terms of processing, phosphorylated; cAMP treatment promotes phosphorylation and activates the channel. Dephosphorylation decreases the ATPase activity (in vitro). Phosphorylation at PKA sites activates the channel. Phosphorylation at PKC sites enhances the response to phosphorylation by PKA. Phosphorylated by AMPK; this inhibits channel activity. Post-translationally, ubiquitinated, leading to its degradation in the lysosome. Deubiquitination by USP10 in early endosomes enhances its endocytic recycling to the cell membrane. Ubiquitinated by RNF185 during ER stress. Ubiquitinated by MARCHF2.

Its subcellular location is the apical cell membrane. It is found in the early endosome membrane. The protein resides in the cell membrane. The protein localises to the recycling endosome membrane. It localises to the endoplasmic reticulum membrane. Its subcellular location is the nucleus. It catalyses the reaction ATP + H2O + closed Cl(-) channel = ADP + phosphate + open Cl(-) channel.. The catalysed reaction is chloride(in) = chloride(out). It carries out the reaction hydrogencarbonate(in) = hydrogencarbonate(out). The enzyme catalyses ATP + H2O = ADP + phosphate + H(+). Epithelial ion channel that plays an important role in the regulation of epithelial ion and water transport and fluid homeostasis. Mediates the transport of chloride ions across the cell membrane. Possesses an intrinsic ATPase activity and utilizes ATP to gate its channel; the passive flow of anions through the channel is gated by cycles of ATP binding and hydrolysis by the ATP-binding domains. The ion channel is also permeable to HCO(3)(-); selectivity depends on the extracellular chloride concentration. Exerts its function also by modulating the activity of other ion channels and transporters. Contributes to the regulation of the pH and the ion content of the epithelial fluid layer. Modulates the activity of the epithelial sodium channel (ENaC) complex, in part by regulating the cell surface expression of the ENaC complex. May regulate bicarbonate secretion and salvage in epithelial cells by regulating the transporter SLC4A7. Can inhibit the chloride channel activity of ANO1. Plays a role in the chloride and bicarbonate homeostasis during sperm epididymal maturation and capacitation. The chain is Cystic fibrosis transmembrane conductance regulator from Plecturocebus moloch (Dusky titi monkey).